The following is a 365-amino-acid chain: tRNA-specific 2-thiouridylase MnmA (365 aa).

Residues A14–S21 and L40 each bind ATP. Catalysis depends on C108, which acts as the Nucleophile. Residues C108 and C204 are joined by a disulfide bond. Residue G132 participates in ATP binding. Positions K154 to Q156 are interaction with tRNA. C204 acts as the Cysteine persulfide intermediate in catalysis.

It belongs to the MnmA/TRMU family.

The protein resides in the cytoplasm. It carries out the reaction S-sulfanyl-L-cysteinyl-[protein] + uridine(34) in tRNA + AH2 + ATP = 2-thiouridine(34) in tRNA + L-cysteinyl-[protein] + A + AMP + diphosphate + H(+). Its function is as follows. Catalyzes the 2-thiolation of uridine at the wobble position (U34) of tRNA, leading to the formation of s(2)U34. In Rickettsia massiliae (strain Mtu5), this protein is tRNA-specific 2-thiouridylase MnmA.